The following is an 834-amino-acid chain: Dual specificity calcium/calmodulin-dependent 3',5'-cyclic nucleotide phosphodiesterase 1 (834 aa).

A disordered region spans residues 152-338 (HSHGRDDQQQ…DELSEVQPDA (187 aa)). A compositionally biased stretch (low complexity) spans 207–222 (THSGPTGPPSNTSSET). Basic and acidic residues predominate over residues 236–252 (TVRESVMEESPSKDPGD). Residues 260–301 (STSTLTSQTTTSSSATAEPSAKAAESQAGSAGSSGSCSNPAA) are compositionally biased toward low complexity. Polar residues predominate over residues 313–322 (WARSMSTNKT). The segment at 364–387 (EKPKFRSVAHAIRAGIFVDRMYRR) is calmodulin-binding. Residues 392–786 (ALTAFPPDVV…RIWKEQAVKD (395 aa)) enclose the PDEase domain. His-469 (proton donor) is an active-site residue. His-473, His-509, Asp-510, and Asp-617 together coordinate Zn(2+). Asp-510 contacts Mg(2+). Disordered stretches follow at residues 720-744 (IVIP…AKTT) and 797-834 (EEAA…GAAA). Positions 732-741 (DKPRDHRTEA) are enriched in basic and acidic residues. The span at 823-834 (EPAAEPADGAAA) shows a compositional bias: low complexity.

This sequence belongs to the cyclic nucleotide phosphodiesterase family. PDE1 subfamily. Zn(2+) serves as cofactor. It depends on Mg(2+) as a cofactor. In terms of tissue distribution, expressed in the head (at protein level). Expressed in Malpighian tubules. Expressed in neurons in the brain and ventral ganglia with male flies having higher levels of expression in the abdominal ganglia compared to female flies.

It catalyses the reaction a nucleoside 3',5'-cyclic phosphate + H2O = a nucleoside 5'-phosphate + H(+). It carries out the reaction 3',5'-cyclic GMP + H2O = GMP + H(+). The catalysed reaction is 3',5'-cyclic AMP + H2O = AMP + H(+). Type I PDE are activated by the binding of calmodulin in the presence of Ca(2+). Inhibited by zaprinast and sildenafil. Its function is as follows. Cyclic nucleotide phosphodiesterase with a dual specificity for the second messengers cAMP and cGMP, which are key regulators of many important physiological processes. Required for male fertility and male mating behavior. This Drosophila melanogaster (Fruit fly) protein is Dual specificity calcium/calmodulin-dependent 3',5'-cyclic nucleotide phosphodiesterase 1.